We begin with the raw amino-acid sequence, 154 residues long: MGLSDGEWQIVLNIWGKVETDLAGHGQEVLIRLFKNHPETLDKFDKFKHLKTEDEMKGSEDLKKHGNTVLTALGGILKKKGHHEAELKPLAQSHATKHKIPVKYLEFISDAIIQVLQSKHSGDFHADTEAAMKKALELFRNDIAAKYKELGFQG.

In terms of domain architecture, Globin spans 2 to 148 (GLSDGEWQIV…FRNDIAAKYK (147 aa)). Residue S4 is modified to Phosphoserine. H65 is a binding site for nitrite. Position 65 (H65) interacts with O2. Phosphothreonine is present on T68. A heme b-binding site is contributed by H94.

The protein belongs to the globin family. In terms of assembly, monomeric.

The protein resides in the cytoplasm. The protein localises to the sarcoplasm. The enzyme catalyses Fe(III)-heme b-[protein] + nitric oxide + H2O = Fe(II)-heme b-[protein] + nitrite + 2 H(+). It carries out the reaction H2O2 + AH2 = A + 2 H2O. In terms of biological role, monomeric heme protein which primary function is to store oxygen and facilitate its diffusion within muscle tissues. Reversibly binds oxygen through a pentacoordinated heme iron and enables its timely and efficient release as needed during periods of heightened demand. Depending on the oxidative conditions of tissues and cells, and in addition to its ability to bind oxygen, it also has a nitrite reductase activity whereby it regulates the production of bioactive nitric oxide. Under stress conditions, like hypoxia and anoxia, it also protects cells against reactive oxygen species thanks to its pseudoperoxidase activity. The protein is Myoglobin (MB) of Canis lupus familiaris (Dog).